An 876-amino-acid chain; its full sequence is Beta-glucosidase 1 (876 aa).

The N-terminal stretch at 1 to 17 is a signal peptide; the sequence is MLMIVQLLVFALGLAVA. Asn22, Asn75, Asn224, and Asn267 each carry an N-linked (GlcNAc...) asparagine glycan. Residue Asp295 is part of the active site. Residues Asn332, Asn339, Asn372, Asn389, Asn426, Asn544, Asn585, Asn739, Asn780, and Asn790 are each glycosylated (N-linked (GlcNAc...) asparagine).

The protein belongs to the glycosyl hydrolase 3 family.

The enzyme catalyses Hydrolysis of terminal, non-reducing beta-D-glucosyl residues with release of beta-D-glucose.. Its pathway is glycan metabolism; cellulose degradation. The chain is Beta-glucosidase 1 (BGL1) from Saccharomycopsis fibuligera (Yeast).